A 73-amino-acid chain; its full sequence is METQKLISMVKEALEKYQYPLTAKNIKVVIQKEYNVVLPTGSINSILYSNSELFEKIDKTNTIYPPLWIRKTN.

It belongs to the asfivirus I73R family.

Its subcellular location is the virion. This is an uncharacterized protein from Ornithodoros (relapsing fever ticks).